The sequence spans 417 residues: Cell division protein FtsA (417 aa).

Belongs to the FtsA/MreB family. In terms of assembly, self-interacts. Interacts with FtsZ.

The protein localises to the cell inner membrane. Functionally, cell division protein that is involved in the assembly of the Z ring. May serve as a membrane anchor for the Z ring. This chain is Cell division protein FtsA, found in Pseudomonas aeruginosa (strain ATCC 15692 / DSM 22644 / CIP 104116 / JCM 14847 / LMG 12228 / 1C / PRS 101 / PAO1).